We begin with the raw amino-acid sequence, 474 residues long: tRNA-2-methylthio-N(6)-dimethylallyladenosine synthase (474 aa).

An MTTase N-terminal domain is found at 3 to 120 (KKLHIKTWGC…LPDMIEQVRR (118 aa)). Residues Cys12, Cys49, Cys83, Cys157, Cys161, and Cys164 each coordinate [4Fe-4S] cluster. Residues 143-375 (RAEGPTAFVS…QDRITQQAMR (233 aa)) enclose the Radical SAM core domain. The TRAM domain occupies 378–441 (RHMMGTVQRI…TNSLRGKFIR (64 aa)).

This sequence belongs to the methylthiotransferase family. MiaB subfamily. Monomer. Requires [4Fe-4S] cluster as cofactor.

The protein localises to the cytoplasm. It catalyses the reaction N(6)-dimethylallyladenosine(37) in tRNA + (sulfur carrier)-SH + AH2 + 2 S-adenosyl-L-methionine = 2-methylsulfanyl-N(6)-dimethylallyladenosine(37) in tRNA + (sulfur carrier)-H + 5'-deoxyadenosine + L-methionine + A + S-adenosyl-L-homocysteine + 2 H(+). Catalyzes the methylthiolation of N6-(dimethylallyl)adenosine (i(6)A), leading to the formation of 2-methylthio-N6-(dimethylallyl)adenosine (ms(2)i(6)A) at position 37 in tRNAs that read codons beginning with uridine. The polypeptide is tRNA-2-methylthio-N(6)-dimethylallyladenosine synthase (Shewanella sp. (strain MR-4)).